A 1530-amino-acid chain; its full sequence is DNA-directed RNA polymerase III subunit RPC1 (1530 aa).

Zn(2+) contacts are provided by cysteine 74, cysteine 77, cysteine 84, histidine 87, cysteine 114, cysteine 117, and cysteine 161. 3 residues coordinate Mg(2+): aspartate 503, aspartate 505, and aspartate 507. Residues 846 to 858 form a bridging helix region; it reads PTEFFFHTMAGRE. Residues 992–1001 are compositionally biased toward basic and acidic residues; that stretch reads EEQESREDAL. 2 disordered regions span residues 992 to 1016 and 1057 to 1099; these read EEQESREDALHNSNGKTNDRESRPR and NLLN…SKEG.

This sequence belongs to the RNA polymerase beta' chain family. In terms of assembly, component of the RNA polymerase III (Pol III) complex consisting of 17 subunits.

It is found in the nucleus. It carries out the reaction RNA(n) + a ribonucleoside 5'-triphosphate = RNA(n+1) + diphosphate. DNA-dependent RNA polymerase catalyzes the transcription of DNA into RNA using the four ribonucleoside triphosphates as substrates. Largest and catalytic core component of RNA polymerase III which synthesizes small RNAs, such as 5S rRNA and tRNAs. Forms the polymerase active center together with the second largest subunit. A single-stranded DNA template strand of the promoter is positioned within the central active site cleft of Pol III. A bridging helix emanates from RPC1 and crosses the cleft near the catalytic site and is thought to promote translocation of Pol III by acting as a ratchet that moves the RNA-DNA hybrid through the active site by switching from straight to bent conformations at each step of nucleotide addition. The polypeptide is DNA-directed RNA polymerase III subunit RPC1 (Trypanosoma brucei brucei).